Here is a 364-residue protein sequence, read N- to C-terminus: Probable zinc transporter 10 (364 aa).

Positions 1-28 (MTKSHVIFSASIALFLLLSISHFPGALS) are cleaved as a signal peptide. The Extracellular portion of the chain corresponds to 29–52 (QSNKDCQSKSNYSCIDKNKALDLK). A helical membrane pass occupies residues 53-73 (LLSIFSILITSLIGVCLPFFA). The Cytoplasmic portion of the chain corresponds to 74–85 (RSIPAFQPEKSH). A helical membrane pass occupies residues 86 to 106 (FLIVKSFASGIILSTGFMHVL). Over 107–125 (PDSFEMLSSPCLNDNPWHK) the chain is Extracellular. A helical membrane pass occupies residues 126-146 (FPFAGFVAMMSAVFTLMVDSI). At 147–209 (TTSVFTKSGR…GSYLQLLRYR (63 aa)) the chain is on the cytoplasmic side. Residues 210 to 230 (ILAIVLELGIVVQSIVIGLSV) form a helical membrane-spanning segment. Over 231–241 (GDTNNTCTIKG) the chain is Extracellular. Residues 242 to 262 (LVAALCFHQMFEGMGLGGCIL) traverse the membrane as a helical segment. Residues 263–271 (QAEYGWVKK) lie on the Cytoplasmic side of the membrane. Residues 272-292 (AVMAFFFAVTTPFGVVLGMAL) form a helical membrane-spanning segment. Over 293–303 (SKTYKENSPES) the chain is Extracellular. The chain crosses the membrane as a helical span at residues 304–324 (LITVGLLNASSAGLLIYMALV). The Cytoplasmic segment spans residues 325 to 343 (DLLAADFMGQKMQRSIKLQ). The chain crosses the membrane as a helical span at residues 344–364 (LKSYAAVLLGAGGMSVMAKWA).

This sequence belongs to the ZIP transporter (TC 2.A.5) family.

It is found in the cell membrane. Its function is as follows. Probably mediates zinc uptake from the rhizosphere. The sequence is that of Probable zinc transporter 10 (ZIP10) from Arabidopsis thaliana (Mouse-ear cress).